Consider the following 117-residue polypeptide: Ribonuclease P protein component (117 aa).

It belongs to the RnpA family. In terms of assembly, consists of a catalytic RNA component (M1 or rnpB) and a protein subunit.

The enzyme catalyses Endonucleolytic cleavage of RNA, removing 5'-extranucleotides from tRNA precursor.. In terms of biological role, RNaseP catalyzes the removal of the 5'-leader sequence from pre-tRNA to produce the mature 5'-terminus. It can also cleave other RNA substrates such as 4.5S RNA. The protein component plays an auxiliary but essential role in vivo by binding to the 5'-leader sequence and broadening the substrate specificity of the ribozyme. The polypeptide is Ribonuclease P protein component (Desulforapulum autotrophicum (strain ATCC 43914 / DSM 3382 / VKM B-1955 / HRM2) (Desulfobacterium autotrophicum)).